The following is a 191-amino-acid chain: Orotate phosphoribosyltransferase (191 aa).

Glu-114 to Ser-122 lines the 5-phospho-alpha-D-ribose 1-diphosphate pocket. 2 residues coordinate orotate: Thr-118 and Arg-146.

It belongs to the purine/pyrimidine phosphoribosyltransferase family. PyrE subfamily. Homodimer. It depends on Mg(2+) as a cofactor.

It catalyses the reaction orotidine 5'-phosphate + diphosphate = orotate + 5-phospho-alpha-D-ribose 1-diphosphate. It participates in pyrimidine metabolism; UMP biosynthesis via de novo pathway; UMP from orotate: step 1/2. Its function is as follows. Catalyzes the transfer of a ribosyl phosphate group from 5-phosphoribose 1-diphosphate to orotate, leading to the formation of orotidine monophosphate (OMP). This chain is Orotate phosphoribosyltransferase, found in Clostridium botulinum (strain Loch Maree / Type A3).